A 256-amino-acid polypeptide reads, in one-letter code: Catechol O-methyltransferase A (256 aa).

The first 27 residues, M1–A27, serve as a signal peptide directing secretion. N-linked (GlcNAc...) asparagine glycosylation occurs at N58. Positions 84, 114, 132, and 183 each coordinate S-adenosyl-L-methionine. A Mg(2+)-binding site is contributed by D183. Residue K186 coordinates substrate. 2 residues coordinate Mg(2+): D211 and N212. Substrate-binding residues include N212 and E241.

The protein belongs to the class I-like SAM-binding methyltransferase superfamily. Cation-dependent O-methyltransferase family. Mg(2+) serves as cofactor. In terms of tissue distribution, widely expressed. Has higher expression in females compared to males. Strongly expressed in liver and diencephalon. Expressed at lower levels in hindbrain, spinal cord, eye, telencephalon, spleen, gut, gill and muscle. Detected in ovary and testis. In eye, detected in all layers of the retina with highest expression in the inner nuclear layer. In gut, expressed in the lamina propria but has little or no expression in gut epithelium. In brain, has strongest expression near the midline of the telencephalon, in the periventricular gray zone of the optic tectum, in the preglomerular nucleus, and near the walls of the diencephalic ventricle.

It localises to the secreted. It carries out the reaction a catechol + S-adenosyl-L-methionine = a guaiacol + S-adenosyl-L-homocysteine + H(+). Catalyzes the O-methylation, and thereby the inactivation, of catecholamine neurotransmitters and catechol hormones. Shows highest activity towards catecholestrogens and dobutamine. Also has lower activity towards L-DOPA, dopamine and epinephrine. Active towards the xenobiotic compounds methyl-DOPA, carbidopa, isoproterenol, and apomorphine. In Danio rerio (Zebrafish), this protein is Catechol O-methyltransferase A.